The primary structure comprises 782 residues: Potassium transporter 6 (782 aa).

Over 1–18 (MEIESGSYQNAKKESWRT) the chain is Cytoplasmic. The chain crosses the membrane as a helical span at residues 19 to 39 (VLTLAYQSLGVVYGDLSISPL). Topologically, residues 40–61 (YVYKSTFAEDIHHSESNEEIFG) are extracellular. A helical transmembrane segment spans residues 62 to 82 (VLSFIFWTITLVPLLKYVFIV). The Cytoplasmic segment spans residues 83-153 (LRADDNGEGG…TLEKHGVLQK (71 aa)). Residues 154 to 174 (ILLVLALIGTCMVIGDGVLTP) traverse the membrane as a helical segment. Over 175-195 (AISVFSAVSGVELSMSKEHHK) the chain is Extracellular. A helical membrane pass occupies residues 196–216 (YIELPAACVILIGLFALQHYG). The Cytoplasmic portion of the chain corresponds to 217–219 (THR). Residues 220–240 (VGFLFAPVILLWLMCISAIGV) traverse the membrane as a helical segment. Over 241-270 (YNIFHWNPHVYQALSPYYMYKFLKKTQSRG) the chain is Extracellular. A helical transmembrane segment spans residues 271-291 (WMSLGGILLCITGSEAMFADL). Residues 292-296 (GHFSQ) lie on the Cytoplasmic side of the membrane. A helical membrane pass occupies residues 297–317 (LSIKIAFTSLVYPSLILAYMG). Residues 318–347 (QAAYLSQHHIIESEYNIGFYVSVPERLRWP) lie on the Extracellular side of the membrane. A helical transmembrane segment spans residues 348 to 368 (VLVIAILAAVVGSQAIITGTF). Residues 369–395 (SIIKQCSALGCFPKVKIVHTSSKIHGQ) are Cytoplasmic-facing. The helical transmembrane segment at 396-416 (IYIPEINWILMVLCLAVTIGF) threads the bilayer. The Extracellular portion of the chain corresponds to 417–421 (RDTKR). 2 helical membrane-spanning segments follow: residues 422–442 (LGNA…CLMS) and 443–463 (LVIV…VVFF). The Extracellular portion of the chain corresponds to 464–474 (GTIESLYFSAS). The chain crosses the membrane as a helical span at residues 475–495 (LIKFLEGAWVPIALAFCFLLA). Residues 496-782 (MCTWHYGTLK…TLEVGMIYNV (287 aa)) are Cytoplasmic-facing. Positions 664 to 675 (YESDIDDPDKPG) are enriched in basic and acidic residues. The interval 664-693 (YESDIDDPDKPGTSEIRSPKPKKKSKSKVK) is disordered. Over residues 682–693 (PKPKKKSKSKVK) the composition is skewed to basic residues.

It belongs to the HAK/KUP transporter (TC 2.A.72.3) family.

It localises to the cell membrane. In terms of biological role, probable potassium transporter. In Arabidopsis thaliana (Mouse-ear cress), this protein is Potassium transporter 6 (POT6).